Reading from the N-terminus, the 111-residue chain is Cytochrome c3, 26 kDa (111 aa).

Heme c contacts are provided by H30, H33, C38, C41, H42, H43, C54, C59, H60, H77, C86, C89, H90, C105, C108, and H109.

In terms of assembly, homodimer. It depends on heme c as a cofactor.

It localises to the periplasm. Its function is as follows. Participates in sulfate respiration coupled with phosphorylation by transferring electrons from the enzyme dehydrogenase to ferredoxin. This Desulfomicrobium norvegicum (strain DSM 1741 / NCIMB 8310) (Desulfovibrio baculatus (strain Norway 4)) protein is Cytochrome c3, 26 kDa.